Consider the following 362-residue polypeptide: tRNA/tmRNA (uracil-C(5))-methyltransferase (362 aa).

Positions 182, 210, 215, 231, and 293 each coordinate S-adenosyl-L-methionine. The active-site Nucleophile is Cys318. The active-site Proton acceptor is Glu352.

This sequence belongs to the class I-like SAM-binding methyltransferase superfamily. RNA M5U methyltransferase family. TrmA subfamily.

It carries out the reaction uridine(54) in tRNA + S-adenosyl-L-methionine = 5-methyluridine(54) in tRNA + S-adenosyl-L-homocysteine + H(+). The catalysed reaction is uridine(341) in tmRNA + S-adenosyl-L-methionine = 5-methyluridine(341) in tmRNA + S-adenosyl-L-homocysteine + H(+). Dual-specificity methyltransferase that catalyzes the formation of 5-methyluridine at position 54 (m5U54) in all tRNAs, and that of position 341 (m5U341) in tmRNA (transfer-mRNA). The sequence is that of tRNA/tmRNA (uracil-C(5))-methyltransferase from Neisseria meningitidis serogroup B (strain ATCC BAA-335 / MC58).